We begin with the raw amino-acid sequence, 435 residues long: MGKQEVKTRQGERVAIVAGLRTPFARQSTEFSQVPAVDLGKMVVSDLLARTDIDPKLIDQVVFGQVVQMPEAPNIAREIVLGTGMNIHTDAYSVTRACATSFQSAVNVAESIMAGAIDIGIAGGADSSSVLPIGVSKKLAASLLALSKTKTLGQKLKVLSGLGLKDLMPVPPAVAEYSTGLSMGQTAEQMAKTHGITRAEQDALAHRSHTLASQAWRDGKIAGEVMTAFPEPYKKWIAEDNNIRHDSTLEGYAKLRPAFDRQYGSVTAANSTPLTDGAAAVLLMREGRAKELGMEILGYIRGYAFSAIGVESDMLMGPSYATSKVLQSTGLALSDLTLIDMHEAFAAQALANVKMFASDKFAQENLGRSKAMGEIDMDKFNVLGGSIAYGHPFAATGARMMTQTLRELKRRGGGLALNTACAAGGLGAAMILEVE.

Cysteine 98 functions as the Acyl-thioester intermediate in the catalytic mechanism. Catalysis depends on proton acceptor residues histidine 391 and cysteine 421.

The protein belongs to the thiolase-like superfamily. Thiolase family. As to quaternary structure, heterotetramer of two alpha chains (FadJ) and two beta chains (FadI).

The protein localises to the cytoplasm. The enzyme catalyses an acyl-CoA + acetyl-CoA = a 3-oxoacyl-CoA + CoA. It functions in the pathway lipid metabolism; fatty acid beta-oxidation. Its function is as follows. Catalyzes the final step of fatty acid oxidation in which acetyl-CoA is released and the CoA ester of a fatty acid two carbons shorter is formed. In Vibrio vulnificus (strain YJ016), this protein is 3-ketoacyl-CoA thiolase.